The chain runs to 59 residues: UPF0391 membrane protein Geob_0344 (59 aa).

A run of 2 helical transmembrane segments spans residues 4-24 and 33-53; these read WAAI…TGIA and FLFI…ITAG.

It belongs to the UPF0391 family.

The protein localises to the cell membrane. The chain is UPF0391 membrane protein Geob_0344 from Geotalea daltonii (strain DSM 22248 / JCM 15807 / FRC-32) (Geobacter daltonii).